Reading from the N-terminus, the 165-residue chain is Crossover junction endodeoxyribonuclease RuvC (165 aa).

Active-site residues include aspartate 8, glutamate 69, and histidine 141. Mg(2+)-binding residues include aspartate 8, glutamate 69, and histidine 141.

This sequence belongs to the RuvC family. As to quaternary structure, homodimer which binds Holliday junction (HJ) DNA. The HJ becomes 2-fold symmetrical on binding to RuvC with unstacked arms; it has a different conformation from HJ DNA in complex with RuvA. In the full resolvosome a probable DNA-RuvA(4)-RuvB(12)-RuvC(2) complex forms which resolves the HJ. The cofactor is Mg(2+).

It localises to the cytoplasm. It catalyses the reaction Endonucleolytic cleavage at a junction such as a reciprocal single-stranded crossover between two homologous DNA duplexes (Holliday junction).. The RuvA-RuvB-RuvC complex processes Holliday junction (HJ) DNA during genetic recombination and DNA repair. Endonuclease that resolves HJ intermediates. Cleaves cruciform DNA by making single-stranded nicks across the HJ at symmetrical positions within the homologous arms, yielding a 5'-phosphate and a 3'-hydroxyl group; requires a central core of homology in the junction. The consensus cleavage sequence is 5'-(A/T)TT(C/G)-3'. Cleavage occurs on the 3'-side of the TT dinucleotide at the point of strand exchange. HJ branch migration catalyzed by RuvA-RuvB allows RuvC to scan DNA until it finds its consensus sequence, where it cleaves and resolves the cruciform DNA. This is Crossover junction endodeoxyribonuclease RuvC from Wolbachia pipientis subsp. Culex pipiens (strain wPip).